The primary structure comprises 113 residues: Hydrogenase maturation factor HypA (113 aa).

Ni(2+) is bound at residue His-2. The Zn(2+) site is built by Cys-70, Cys-73, Cys-86, and Cys-88.

It belongs to the HypA/HybF family.

In terms of biological role, involved in the maturation of [NiFe] hydrogenases. Required for nickel insertion into the metal center of the hydrogenase. This Trichormus variabilis (strain ATCC 29413 / PCC 7937) (Anabaena variabilis) protein is Hydrogenase maturation factor HypA.